The chain runs to 632 residues: Cleavage stimulation factor subunit 2 tau variant (632 aa).

The RRM domain occupies 16-94; the sequence is RSVFVGNIPY…RALRVDNAAS (79 aa). 2 disordered regions span residues 201 to 296 and 365 to 433; these read IPGK…PGGA and YMGP…TRPM. The segment covering 213–233 has biased composition (pro residues); the sequence is PGGPGPSGPGGPGPGPAPGLC. The span at 234–244 shows a compositional bias: low complexity; sequence PGPNVMLNQQN. Residues 275 to 287 show a composition bias toward pro residues; the sequence is APGPIPAAVPGPG. Residues 365–375 are compositionally biased toward low complexity; sequence YMGPPHQGPPM. Composition is skewed to basic and acidic residues over residues 377-390 and 420-433; these read HGHD…HDMR and RGGR…TRPM. Residues 428 to 432 form a 1-1; approximate repeat; the sequence is METRP. Positions 428-466 are 8 X 5 AA tandem repeats of M-E-T-R-[AG]; that stretch reads METRPMETEVLEPRGMERRMETCAMETRGMDARGLEMRG. One copy of the 1-2; approximate repeat lies at 433–437; that stretch reads METEV. The stretch at 438–442 is one 1-3; approximate repeat; the sequence is LEPRG. Residues 443 to 446 form a 1-4; approximate repeat; that stretch reads MERR. The stretch at 447 to 451 is one 1-5; approximate repeat; the sequence is METCA. The stretch at 452-456 is one 1-6 repeat; it reads METRG. Residues 457–461 form a 1-7; approximate repeat; that stretch reads MDARG. One copy of the 1-8; approximate repeat lies at 462 to 466; sequence LEMRG. One copy of the 2-1; approximate repeat lies at 508-512; it reads GGTMQ. Residues 508-565 form a 12 X 5 AA tandem repeats of G-[AT]-G-[MI]-Q region; sequence GGTMQGAGIQGGGMQGAGMQGGGMQGAGMQGGGMQGAGMQAGMQGASMQGGMQGAGMQ. Residues 513–517 form a 2-2 repeat; that stretch reads GAGIQ. One copy of the 2-3; approximate repeat lies at 518–522; sequence GGGMQ. The segment covering 519–543 has biased composition (gly residues); the sequence is GGMQGAGMQGGGMQGAGMQGGGMQG. The segment at 519–590 is disordered; that stretch reads GGMQGAGMQG…GQSQVTPQDQ (72 aa). Residues 523–527 form a 2-4 repeat; it reads GAGMQ. One copy of the 2-5; approximate repeat lies at 528 to 532; the sequence is GGGMQ. One copy of the 2-6 repeat lies at 533 to 537; it reads GAGMQ. Residues 538–542 form a 2-7; approximate repeat; that stretch reads GGGMQ. One copy of the 2-8 repeat lies at 543 to 547; that stretch reads GAGMQ. The segment covering 544–557 has biased composition (low complexity); the sequence is AGMQAGMQGASMQG. One copy of the 2-9; approximate repeat lies at 548–551; it reads AGMQ. The stretch at 552–556 is one 2-10; approximate repeat; the sequence is GASMQ. The stretch at 557 to 560 is one 2-11; approximate repeat; the sequence is GGMQ. Over residues 558–574 the composition is skewed to gly residues; that stretch reads GMQGAGMQGASKQGGGQ. A 2-12 repeat occupies 561–565; sequence GAGMQ. The segment covering 575-584 has biased composition (low complexity); sequence PSSFSPGQSQ. The residue at position 579 (Ser579) is a Phosphoserine.

As to expression, expressed in testes, where it is restricted to pachytene spermatocytes and spermatids, and in the brain (at protein level).

Its subcellular location is the nucleus. In terms of biological role, may play a significant role in AAUAAA-independent mRNA polyadenylation in germ cells. Directly involved in the binding to pre-mRNAs. The sequence is that of Cleavage stimulation factor subunit 2 tau variant (Cstf2t) from Mus musculus (Mouse).